The chain runs to 249 residues: MASCCPTSRGAAASNKSYTFKGKEIENFGGLTTYVVGSTSNTRVLIGFMDIFGLSDQIKEGADKLADDGFTVYLPDFLEGKPLPVTALPPKTPEDQKLCNDFFSTRISPNLHWPKLAKVVEAVRANHGPNVTIGTYGFCWGAKVLVTYPATIDFVGIASCHPSFPDSADAANVHCPVLFLCSKDEDAKIIKEWEEAFKTNPAYAKSSFETFSDMFHGWMAARADLSNPEQRKRFDEGYQKVSSFFQSLM.

The protein belongs to the AIM2 family.

It is found in the cytoplasm. The protein localises to the nucleus. This is an uncharacterized protein from Schizosaccharomyces pombe (strain 972 / ATCC 24843) (Fission yeast).